An 83-amino-acid chain; its full sequence is GDIANGEQVFTGNCAACHSVZZZKTLELSSLWKAKSYLANFNGDESAIVYQVTNGKNAMPAFGGRLEDDEIANVASYVLSKAG.

Residues C14, C17, and H18 each contribute to the heme c site. K24 is subject to N6-methyllysine; partial. Position 59 (M59) interacts with heme c.

The protein belongs to the cytochrome c family. PetJ subfamily. As to quaternary structure, monomer. Post-translationally, binds 1 heme c group covalently per subunit. In terms of processing, 50% of the molecules were found to be monomethylated at Lys-24.

Its subcellular location is the plastid. It localises to the chloroplast thylakoid lumen. Functions as an electron carrier between membrane-bound cytochrome b6-f and photosystem I in oxygenic photosynthesis. The chain is Cytochrome c6 (petJ) from Diacronema lutheri (Unicellular marine alga).